The sequence spans 281 residues: Very-long-chain (3R)-3-hydroxyacyl-CoA dehydratase 1 (281 aa).

The Cytoplasmic segment spans residues 1-68 (MGKGDWRQGR…RRLGLLATAW (68 aa)). The chain crosses the membrane as a helical span at residues 69–88 (LTFYNIAMTAGWLVLAIAMV). Residues 89-107 (RFYMEKGTHRGLYKSIQKT) lie on the Lumenal side of the membrane. The helical transmembrane segment at 108–124 (LKFFQTFALLEVVHCLI) threads the bilayer. The Cytoplasmic segment spans residues 125 to 134 (GIVPTSVLVT). A helical membrane pass occupies residues 135–152 (GVQVSSRIFMVWLITHSI). Topologically, residues 153–158 (KPIQNE) are lumenal. The chain crosses the membrane as a helical span at residues 159 to 173 (ESVVLFLVSWTVTEI). Residues 174–196 (TRYSFYTFSLLDHLPHFIKWARY) are Cytoplasmic-facing. Residues 197 to 214 (NLFIILYPVGVAGELLTI) traverse the membrane as a helical segment. Catalysis depends on residues Tyr203 and Glu210. Residues 215 to 244 (YAALPYVKKSGMFSVRLPNKYNVSFDYYYF) lie on the Lumenal side of the membrane. Asn236 carries N-linked (GlcNAc...) asparagine glycosylation. A helical membrane pass occupies residues 245 to 262 (LLITMASYIPLFPQLYFH). Residues 263 to 281 (MLRQRRKVLHGEVIAEKDD) are Cytoplasmic-facing.

The protein belongs to the very long-chain fatty acids dehydratase HACD family. In terms of assembly, may interact with enzymes of the ELO family (including ELOVL1); with those enzymes that mediate condensation, the first of the four steps of the reaction cycle responsible for fatty acids elongation, may be part of a larger fatty acids elongase complex. Interacts with TECR. Post-translationally, N-glycosylated. Expressed at high levels in heart, skeletal muscle and testis, weak expression in kidney and liver.

Its subcellular location is the endoplasmic reticulum membrane. It catalyses the reaction a very-long-chain (3R)-3-hydroxyacyl-CoA = a very-long-chain (2E)-enoyl-CoA + H2O. The enzyme catalyses (3R)-hydroxyhexadecanoyl-CoA = (2E)-hexadecenoyl-CoA + H2O. The catalysed reaction is (3R)-hydroxyoctadecanoyl-CoA = (2E)-octadecenoyl-CoA + H2O. It carries out the reaction (3R)-hydroxyeicosanoyl-CoA = (2E)-eicosenoyl-CoA + H2O. It catalyses the reaction (3R)-hydroxydocosanoyl-CoA = (2E)-docosenoyl-CoA + H2O. The enzyme catalyses (3R)-hydroxytetracosanoyl-CoA = (2E)-tetracosenoyl-CoA + H2O. The catalysed reaction is (3R)-hydroxyhexacosanoyl-CoA = (2E)-hexacosenoyl-CoA + H2O. It participates in lipid metabolism; fatty acid biosynthesis. This chain is Very-long-chain (3R)-3-hydroxyacyl-CoA dehydratase 1, found in Mus musculus (Mouse).